Consider the following 329-residue polypeptide: 4-hydroxythreonine-4-phosphate dehydrogenase (329 aa).

Substrate contacts are provided by histidine 136 and threonine 137. The a divalent metal cation site is built by histidine 166, histidine 211, and histidine 266. Substrate-binding residues include lysine 274, asparagine 283, and arginine 292.

This sequence belongs to the PdxA family. Homodimer. Zn(2+) is required as a cofactor. Mg(2+) serves as cofactor. It depends on Co(2+) as a cofactor.

The protein resides in the cytoplasm. The enzyme catalyses 4-(phosphooxy)-L-threonine + NAD(+) = 3-amino-2-oxopropyl phosphate + CO2 + NADH. It functions in the pathway cofactor biosynthesis; pyridoxine 5'-phosphate biosynthesis; pyridoxine 5'-phosphate from D-erythrose 4-phosphate: step 4/5. In terms of biological role, catalyzes the NAD(P)-dependent oxidation of 4-(phosphooxy)-L-threonine (HTP) into 2-amino-3-oxo-4-(phosphooxy)butyric acid which spontaneously decarboxylates to form 3-amino-2-oxopropyl phosphate (AHAP). The sequence is that of 4-hydroxythreonine-4-phosphate dehydrogenase from Escherichia coli O6:H1 (strain CFT073 / ATCC 700928 / UPEC).